The sequence spans 386 residues: Probable family 17 glucosidase SCW4 (386 aa).

An N-terminal signal peptide occupies residues 1–19 (MRLSNLIASASLLSAATLA). A propeptide spanning residues 20-30 (APANHEHKDKR) is cleaved from the precursor. The disordered stretch occupies residues 88–127 (ENNSQVSAAASPASSSAATSTQSSSSSQASSSSSSGEDVS). Residue Asn89 is glycosylated (N-linked (GlcNAc...) asparagine). Residue Glu323 is the Nucleophile of the active site.

It belongs to the glycosyl hydrolase 17 family. In terms of processing, N-glycosylated.

The protein resides in the secreted. It is found in the cell wall. Glucanases possibly play a role in cell expansion during growth, in cell-cell fusion during mating, and in spore release during sporulation. The polypeptide is Probable family 17 glucosidase SCW4 (SCW4) (Saccharomyces cerevisiae (strain ATCC 204508 / S288c) (Baker's yeast)).